Here is a 149-residue protein sequence, read N- to C-terminus: Large ribosomal subunit protein uL15 (149 aa).

The segment covering 1–29 has biased composition (basic residues); it reads MVSHLKKTRKLRGHVSHGHGRVGKHRKGG. The interval 1–38 is disordered; sequence MVSHLKKTRKLRGHVSHGHGRVGKHRKGGCRGGRGKAG.

The protein belongs to the universal ribosomal protein uL15 family.

The protein is Large ribosomal subunit protein uL15 (RPL27A) of Tetrahymena thermophila.